Consider the following 287-residue polypeptide: uncharacterized protein (287 aa).

Residues 115–287 (PQNFDREWNP…NLAIELLKAI (173 aa)) enclose the ATP-grasp domain. Residues K145 and 178-188 (QKYITCSKGES) contribute to the ATP site. Mg(2+)-binding residues include D248, E261, and N263. 3 residues coordinate Mn(2+): D248, E261, and N263.

The protein belongs to the RimK family.

This is an uncharacterized protein from Mycoplasma genitalium (strain ATCC 33530 / DSM 19775 / NCTC 10195 / G37) (Mycoplasmoides genitalium).